We begin with the raw amino-acid sequence, 570 residues long: Eukaryotic translation initiation factor 2D (570 aa).

Met1 bears the N-acetylmethionine mark. Residues Leu93 to Gln173 enclose the PUA domain. The disordered stretch occupies residues Pro224 to Lys245. Ser238, Ser241, and Ser348 each carry phosphoserine. Residues Ser370–Asn454 enclose the SWIB/MDM2 domain. The SUI1 domain occupies Ile478–Leu548.

The protein belongs to the eIF2D family.

It is found in the cytoplasm. In terms of biological role, translation initiation factor that is able to deliver tRNA to the P-site of the eukaryotic ribosome in a GTP-independent manner. The binding of Met-tRNA(I) occurs after the AUG codon finds its position in the P-site of 40S ribosomes, the situation that takes place during initiation complex formation on some specific RNAs. Its activity in tRNA binding with 40S subunits does not require the presence of the aminoacyl moiety. Possesses the unique ability to deliver non-Met (elongator) tRNAs into the P-site of the 40S subunit. In addition to its role in initiation, can promote release of deacylated tRNA and mRNA from recycled 40S subunits following ABCE1-mediated dissociation of post-termination ribosomal complexes into subunits. This Mus musculus (Mouse) protein is Eukaryotic translation initiation factor 2D (Eif2d).